The primary structure comprises 386 residues: Methylthioribose-1-phosphate isomerase (386 aa).

Asp-258 functions as the Proton donor in the catalytic mechanism.

The protein belongs to the eIF-2B alpha/beta/delta subunits family. MtnA subfamily.

The protein resides in the cytoplasm. The protein localises to the nucleus. The enzyme catalyses 5-(methylsulfanyl)-alpha-D-ribose 1-phosphate = 5-(methylsulfanyl)-D-ribulose 1-phosphate. The protein operates within amino-acid biosynthesis; L-methionine biosynthesis via salvage pathway; L-methionine from S-methyl-5-thio-alpha-D-ribose 1-phosphate: step 1/6. Catalyzes the interconversion of methylthioribose-1-phosphate (MTR-1-P) into methylthioribulose-1-phosphate (MTRu-1-P). This Postia placenta (strain ATCC 44394 / Madison 698-R) (Brown rot fungus) protein is Methylthioribose-1-phosphate isomerase.